Reading from the N-terminus, the 482-residue chain is Scarecrow-like protein 3 (482 aa).

The region spanning 45–479 is the GRAS domain; it reads LKPEERGLYL…RPLYSVSAWR (435 aa). The segment at 52–115 is leucine repeat I (LRI); sequence LYLIHLLLTC…ILKSWPGLYK (64 aa). The VHIID stretch occupies residues 134–199; sequence RRLFFEMFPI…EGPPHLRITG (66 aa). Positions 165-169 match the VHIID motif; it reads VHVID. The tract at residues 209–241 is leucine repeat II (LRII); sequence QMAHRLIEEAEKLDIPFQFNPVVSRLDCLNVEQ. Residues 250-401 are PFYRE; that stretch reads LAVSSVLQLH…KMLFGEEIKN (152 aa). The tract at residues 302 to 324 is disordered; sequence ENDMSNNNGYSPSGDSASSLPLP. Positions 305–324 are enriched in polar residues; it reads MSNNNGYSPSGDSASSLPLP. Residues 404–479 form an SAW region; that stretch reads SCEGFERRER…RPLYSVSAWR (76 aa).

Belongs to the GRAS family. Binds to zinc finger proteins MGP/IDD3, IDD4, IDD5, BIB/IDD9 and JKD/IDD10. In terms of tissue distribution, expressed in seedlings, root epidermis, leaves, flowers and siliques.

It is found in the nucleus. In terms of biological role, probable transcription factor involved in plant development. The polypeptide is Scarecrow-like protein 3 (Arabidopsis thaliana (Mouse-ear cress)).